A 97-amino-acid polypeptide reads, in one-letter code: Co-chaperonin GroES (97 aa).

Belongs to the GroES chaperonin family. In terms of assembly, heptamer of 7 subunits arranged in a ring. Interacts with the chaperonin GroEL.

It localises to the cytoplasm. Its function is as follows. Together with the chaperonin GroEL, plays an essential role in assisting protein folding. The GroEL-GroES system forms a nano-cage that allows encapsulation of the non-native substrate proteins and provides a physical environment optimized to promote and accelerate protein folding. GroES binds to the apical surface of the GroEL ring, thereby capping the opening of the GroEL channel. The protein is Co-chaperonin GroES of Pseudomonas fluorescens (strain ATCC BAA-477 / NRRL B-23932 / Pf-5).